A 346-amino-acid polypeptide reads, in one-letter code: Uroporphyrinogen decarboxylase (346 aa).

Residues 21-25, Asp71, Tyr146, Ser201, and His316 contribute to the substrate site; that span reads RQAGR.

This sequence belongs to the uroporphyrinogen decarboxylase family. Homodimer.

Its subcellular location is the cytoplasm. The enzyme catalyses uroporphyrinogen III + 4 H(+) = coproporphyrinogen III + 4 CO2. It participates in porphyrin-containing compound metabolism; protoporphyrin-IX biosynthesis; coproporphyrinogen-III from 5-aminolevulinate: step 4/4. Catalyzes the decarboxylation of four acetate groups of uroporphyrinogen-III to yield coproporphyrinogen-III. The polypeptide is Uroporphyrinogen decarboxylase (Rickettsia rickettsii (strain Iowa)).